Reading from the N-terminus, the 100-residue chain is NAD(P)H-quinone oxidoreductase subunit 4L, chloroplastic (100 aa).

3 helical membrane-spanning segments follow: residues 1–21, 29–49, and 63–83; these read MIEN…YGLI, ALMC…TFSN, and ISVI…ILII.

This sequence belongs to the complex I subunit 4L family. NDH is composed of at least 16 different subunits, 5 of which are encoded in the nucleus.

Its subcellular location is the plastid. The protein localises to the chloroplast thylakoid membrane. It carries out the reaction a plastoquinone + NADH + (n+1) H(+)(in) = a plastoquinol + NAD(+) + n H(+)(out). The enzyme catalyses a plastoquinone + NADPH + (n+1) H(+)(in) = a plastoquinol + NADP(+) + n H(+)(out). NDH shuttles electrons from NAD(P)H:plastoquinone, via FMN and iron-sulfur (Fe-S) centers, to quinones in the photosynthetic chain and possibly in a chloroplast respiratory chain. The immediate electron acceptor for the enzyme in this species is believed to be plastoquinone. Couples the redox reaction to proton translocation, and thus conserves the redox energy in a proton gradient. The polypeptide is NAD(P)H-quinone oxidoreductase subunit 4L, chloroplastic (Angiopteris evecta (Mule's foot fern)).